The sequence spans 92 residues: uncharacterized protein (92 aa).

A helical transmembrane segment spans residues 65 to 86; it reads AVWIFWLCFLVSGLSRAFLVYF.

It is found in the membrane. This is an uncharacterized protein from Treponema pallidum (strain Nichols).